Reading from the N-terminus, the 1011-residue chain is Ankyrin repeat domain-containing protein 18B (1011 aa).

ANK repeat units follow at residues Lys-67–Ile-96, Leu-100–Ile-129, Tyr-133–Ala-162, Glu-166–Ala-195, and Phe-199–Ser-228. 2 disordered regions span residues Leu-264–Lys-330 and Met-533–Arg-554. Coiled-coil stretches lie at residues Glu-277–Gln-319, Asn-385–Asp-639, Ile-692–Met-722, and Phe-752–Ala-908. Residues Lys-280–Glu-293 are compositionally biased toward basic residues. Residues Gly-294–Gln-319 are compositionally biased toward basic and acidic residues.

The sequence is that of Ankyrin repeat domain-containing protein 18B (ANKRD18B) from Homo sapiens (Human).